Consider the following 655-residue polypeptide: NAD(P)H-quinone oxidoreductase subunit 5, chloroplastic (655 aa).

Helical transmembrane passes span 7 to 27 (YAWLIPILPFLGSMIIGLGLI), 40 to 60 (FAFFNIVLLGIALIFSISILI), 89 to 109 (IDPLTSVMLVLVTSVAILVMI), 124 to 144 (FFAYLSLFTASMLGLVLSPNL), 147 to 167 (IYVFWELVGMCSYLLIGFWFT), 185 to 205 (GDFGLFLGILGLYWVTGSFEF), 226 to 246 (HPVQVELLVLFNLLVFLGPMA), 265 to 285 (TPISALIHAATMVAAGVFLVA), 296 to 316 (IVMGFIAWIGAITAIIAAIIA), 334 to 354 (LGYMIMAMGVGSYTAGLFHLI), 361 to 381 (ALLFLGSGSVIHGMEPVVGFN), 402 to 422 (AITFLLGTLSLCGIPPMACFW), 434 to 454 (AQPILWIIAWVTAGLTSFYMF), 488 to 508 (ILIPLIILALVTTLVGFVGTP), 533 to 553 (LSMSGSSVGIALIGLTLASLI), and 635 to 655 (QSYVFVIIFATLIFVLASQGF).

The protein belongs to the complex I subunit 5 family. In terms of assembly, NDH is composed of at least 16 different subunits, 5 of which are encoded in the nucleus.

The protein localises to the plastid. It is found in the chloroplast thylakoid membrane. The catalysed reaction is a plastoquinone + NADH + (n+1) H(+)(in) = a plastoquinol + NAD(+) + n H(+)(out). The enzyme catalyses a plastoquinone + NADPH + (n+1) H(+)(in) = a plastoquinol + NADP(+) + n H(+)(out). Its function is as follows. NDH shuttles electrons from NAD(P)H:plastoquinone, via FMN and iron-sulfur (Fe-S) centers, to quinones in the photosynthetic chain and possibly in a chloroplast respiratory chain. The immediate electron acceptor for the enzyme in this species is believed to be plastoquinone. Couples the redox reaction to proton translocation, and thus conserves the redox energy in a proton gradient. This chain is NAD(P)H-quinone oxidoreductase subunit 5, chloroplastic (ndhF), found in Chlorokybus atmophyticus (Soil alga).